The following is a 572-amino-acid chain: Squalene synthase (572 aa).

The next 2 membrane-spanning stretches (helical) occupy residues 316 to 336 and 492 to 512; these read SVFNFCAIPQVMAIATLELMF and FFLIILVGMVTFMGIVALITW.

It belongs to the phytoene/squalene synthase family. Monomer. The cofactor is Mg(2+).

It localises to the endoplasmic reticulum membrane. It catalyses the reaction 2 (2E,6E)-farnesyl diphosphate + NADPH + H(+) = squalene + 2 diphosphate + NADP(+). The enzyme catalyses 2 (2E,6E)-farnesyl diphosphate + NADH + H(+) = squalene + 2 diphosphate + NAD(+). Its pathway is terpene metabolism; lanosterol biosynthesis; lanosterol from farnesyl diphosphate: step 1/3. In terms of biological role, catalyzes the condensation of 2 two farnesyl pyrophosphate moieties to form squalene. It is the first committed enzyme of the sterol biosynthesis pathway. Required for the biosynthesis of ergosterol. This chain is Squalene synthase (ERG9), found in Mycosarcoma maydis (Corn smut fungus).